Consider the following 261-residue polypeptide: Cyclin-J18-like (261 aa).

The protein belongs to the cyclin family.

The chain is Cyclin-J18-like from Oryza sativa subsp. japonica (Rice).